A 66-amino-acid polypeptide reads, in one-letter code: Putative antitoxin APE_0279a.1 (66 aa).

Belongs to the UPF0165 family.

In terms of biological role, possibly the antitoxin component of a type II toxin-antitoxin (TA) system. The polypeptide is Putative antitoxin APE_0279a.1 (Aeropyrum pernix (strain ATCC 700893 / DSM 11879 / JCM 9820 / NBRC 100138 / K1)).